Consider the following 60-residue polypeptide: Homeobox protein engrailed-like A (60 aa).

Positions alanine 1–glutamine 41 form a DNA-binding region, homeobox.

The protein belongs to the engrailed homeobox family.

It localises to the nucleus. This is Homeobox protein engrailed-like A from Myxine glutinosa (Atlantic hagfish).